The sequence spans 306 residues: Bifunctional protein FolD 2 (306 aa).

Residues 169-171 (GHS) and Ile235 contribute to the NADP(+) site.

Belongs to the tetrahydrofolate dehydrogenase/cyclohydrolase family. Homodimer.

The enzyme catalyses (6R)-5,10-methylene-5,6,7,8-tetrahydrofolate + NADP(+) = (6R)-5,10-methenyltetrahydrofolate + NADPH. It catalyses the reaction (6R)-5,10-methenyltetrahydrofolate + H2O = (6R)-10-formyltetrahydrofolate + H(+). Its pathway is one-carbon metabolism; tetrahydrofolate interconversion. In terms of biological role, catalyzes the oxidation of 5,10-methylenetetrahydrofolate to 5,10-methenyltetrahydrofolate and then the hydrolysis of 5,10-methenyltetrahydrofolate to 10-formyltetrahydrofolate. This chain is Bifunctional protein FolD 2, found in Mesorhizobium japonicum (strain LMG 29417 / CECT 9101 / MAFF 303099) (Mesorhizobium loti (strain MAFF 303099)).